A 281-amino-acid chain; its full sequence is Pantothenate synthetase (281 aa).

Residue 30–37 (MGYLHDGH) participates in ATP binding. The Proton donor role is filled by His37. Position 61 (Gln61) interacts with (R)-pantoate. Gln61 contributes to the beta-alanine binding site. 147-150 (GEKD) is an ATP binding site. A (R)-pantoate-binding site is contributed by Gln153. ATP contacts are provided by residues Ile176 and 184–187 (KSSR).

This sequence belongs to the pantothenate synthetase family. Homodimer.

The protein localises to the cytoplasm. It catalyses the reaction (R)-pantoate + beta-alanine + ATP = (R)-pantothenate + AMP + diphosphate + H(+). It participates in cofactor biosynthesis; (R)-pantothenate biosynthesis; (R)-pantothenate from (R)-pantoate and beta-alanine: step 1/1. Functionally, catalyzes the condensation of pantoate with beta-alanine in an ATP-dependent reaction via a pantoyl-adenylate intermediate. The chain is Pantothenate synthetase from Clostridium acetobutylicum (strain ATCC 824 / DSM 792 / JCM 1419 / IAM 19013 / LMG 5710 / NBRC 13948 / NRRL B-527 / VKM B-1787 / 2291 / W).